A 297-amino-acid chain; its full sequence is Phosphatidylserine decarboxylase proenzyme (297 aa).

Residues D100, H157, and S263 each act as charge relay system; for autoendoproteolytic cleavage activity in the active site. The Schiff-base intermediate with substrate; via pyruvic acid; for decarboxylase activity role is filled by S263. S263 carries the pyruvic acid (Ser); by autocatalysis modification.

This sequence belongs to the phosphatidylserine decarboxylase family. PSD-B subfamily. Prokaryotic type I sub-subfamily. Heterodimer of a large membrane-associated beta subunit and a small pyruvoyl-containing alpha subunit. It depends on pyruvate as a cofactor. Is synthesized initially as an inactive proenzyme. Formation of the active enzyme involves a self-maturation process in which the active site pyruvoyl group is generated from an internal serine residue via an autocatalytic post-translational modification. Two non-identical subunits are generated from the proenzyme in this reaction, and the pyruvate is formed at the N-terminus of the alpha chain, which is derived from the carboxyl end of the proenzyme. The autoendoproteolytic cleavage occurs by a canonical serine protease mechanism, in which the side chain hydroxyl group of the serine supplies its oxygen atom to form the C-terminus of the beta chain, while the remainder of the serine residue undergoes an oxidative deamination to produce ammonia and the pyruvoyl prosthetic group on the alpha chain. During this reaction, the Ser that is part of the protease active site of the proenzyme becomes the pyruvoyl prosthetic group, which constitutes an essential element of the active site of the mature decarboxylase.

It localises to the cell membrane. It catalyses the reaction a 1,2-diacyl-sn-glycero-3-phospho-L-serine + H(+) = a 1,2-diacyl-sn-glycero-3-phosphoethanolamine + CO2. It functions in the pathway phospholipid metabolism; phosphatidylethanolamine biosynthesis; phosphatidylethanolamine from CDP-diacylglycerol: step 2/2. Catalyzes the formation of phosphatidylethanolamine (PtdEtn) from phosphatidylserine (PtdSer). The polypeptide is Phosphatidylserine decarboxylase proenzyme (Glaesserella parasuis serovar 5 (strain SH0165) (Haemophilus parasuis)).